We begin with the raw amino-acid sequence, 326 residues long: Mitochondrial glycine transporter (326 aa).

Solcar repeat units follow at residues 45–134, 141–225, and 237–321; these read HPVI…SKQY, PTAL…TRAT, and LMPL…MMAK. 6 helical membrane-spanning segments follow: residues 51-76, 109-135, 147-172, 200-223, 241-267, and 296-314; these read FLCGSISGTCSTLLFQPLDLLKTRLQ, GMSPSIVRCVPGVGIYFGTLYSSKQYF, VILGMGSRSVAGVCMSPITVVKTRYE, GLTATLLRDAPFSGLYLMFYSQTR, VNFSCGVFAGILASLVTQPADVIKTHM, and GSVPRALRRTLMAAMAWTV.

Belongs to the mitochondrial carrier (TC 2.A.29) family. SLC25A38 subfamily.

It localises to the mitochondrion inner membrane. It catalyses the reaction glycine(in) = glycine(out). Mitochondrial glycine transporter that imports glycine into the mitochondrial matrix. Plays an important role in providing glycine for the first enzymatic step in heme biosynthesis, the condensation of glycine with succinyl-CoA to produce 5-aminolevulinate (ALA) in the mitochondrial matrix. Required during erythropoiesis. Its function is as follows. Plays a role as pro-apoptotic protein that induces caspase-dependent apoptosis. The sequence is that of Mitochondrial glycine transporter from Rattus norvegicus (Rat).